A 224-amino-acid chain; its full sequence is ATP phosphoribosyltransferase (224 aa).

This sequence belongs to the ATP phosphoribosyltransferase family. Short subfamily. Heteromultimer composed of HisG and HisZ subunits.

The protein resides in the cytoplasm. It carries out the reaction 1-(5-phospho-beta-D-ribosyl)-ATP + diphosphate = 5-phospho-alpha-D-ribose 1-diphosphate + ATP. It functions in the pathway amino-acid biosynthesis; L-histidine biosynthesis; L-histidine from 5-phospho-alpha-D-ribose 1-diphosphate: step 1/9. Functionally, catalyzes the condensation of ATP and 5-phosphoribose 1-diphosphate to form N'-(5'-phosphoribosyl)-ATP (PR-ATP). Has a crucial role in the pathway because the rate of histidine biosynthesis seems to be controlled primarily by regulation of HisG enzymatic activity. This chain is ATP phosphoribosyltransferase, found in Cupriavidus pinatubonensis (strain JMP 134 / LMG 1197) (Cupriavidus necator (strain JMP 134)).